The primary structure comprises 395 residues: DDB1- and CUL4-associated factor 4-like protein 2 (395 aa).

WD repeat units lie at residues 268-307 (SHDS…CVTQ) and 312-351 (VNNS…LLTT).

The chain is DDB1- and CUL4-associated factor 4-like protein 2 (DCAF4L2) from Homo sapiens (Human).